The sequence spans 424 residues: Zona pellucida sperm-binding protein 3 (424 aa).

The first 22 residues, 1–22, serve as a signal peptide directing secretion; it reads MELSYRLFICLLLWGSTELCYP. Gln-23 is subject to Pyrrolidone carboxylic acid. Residues 23 to 387 are Extracellular-facing; that stretch reads QPLWLLQGGA…QWALPSDTSV (365 aa). One can recognise a ZP domain in the interval 45–307; the sequence is ECQEATLMVM…KACSFSKPSN (263 aa). 2 disulfides stabilise this stretch: Cys-46–Cys-140 and Cys-78–Cys-99. 2 N-linked (GlcNAc...) asparagine glycosylation sites follow: Asn-125 and Asn-147. 3 O-linked (GalNAc...) threonine glycosylation sites follow: Thr-156, Thr-162, and Thr-163. Intrachain disulfides connect Cys-217–Cys-282 and Cys-239–Cys-300. An N-linked (GlcNAc...) asparagine glycan is attached at Asn-272. A disordered region spans residues 330–356; that stretch reads PSHSRRQPHVMSQWSRSASRNRRHVTE. A propeptide spans 351–424 (removed in mature form); that stretch reads RRHVTEEADV…TASHPVSASE (74 aa). The chain crosses the membrane as a helical span at residues 388–408; it reads VLLGVGLAVVVSLTLTAVILV. The Cytoplasmic portion of the chain corresponds to 409-424; that stretch reads LTRRCRTASHPVSASE.

It belongs to the ZP domain family. ZPC subfamily. As to quaternary structure, polymers of ZP2 and ZP3 organized into long filaments cross-linked by ZP1 homodimers. Interacts with ZP1 and ZP2. Proteolytically cleaved before the transmembrane segment to yield the secreted ectodomain incorporated in the zona pellucida. In terms of processing, N-glycosylated. Post-translationally, O-glycosylated; removal of O-linked glycans may play an important role in the post-fertilization block to polyspermy. In terms of tissue distribution, expressed in oocytes (at protein level).

Its subcellular location is the zona pellucida. The protein resides in the cell membrane. In terms of biological role, component of the zona pellucida, an extracellular matrix surrounding oocytes which mediates sperm binding, induction of the acrosome reaction and prevents post-fertilization polyspermy. The zona pellucida is composed of 3 to 4 glycoproteins, ZP1, ZP2, ZP3, and ZP4. ZP3 is essential for sperm binding and zona matrix formation. This chain is Zona pellucida sperm-binding protein 3 (ZP3), found in Homo sapiens (Human).